The chain runs to 330 residues: Putative [LysW]-L-2-aminoadipate/[LysW]-L-glutamate phosphate reductase (330 aa).

Position 10-13 (10-13) interacts with NADP(+); it reads SGYI. C142 is a catalytic residue. N297 is a binding site for NADP(+).

Belongs to the NAGSA dehydrogenase family. Type 1 subfamily. LysY sub-subfamily.

It localises to the cytoplasm. The catalysed reaction is [amino-group carrier protein]-C-terminal-N-(1-carboxy-5-oxopentan-1-yl)-L-glutamine + phosphate + NADP(+) = [amino-group carrier protein]-C-terminal-N-(1-carboxy-5-phosphooxy-5-oxopentan-1-yl)-L-glutamine + NADPH + H(+). It catalyses the reaction [amino-group carrier protein]-C-terminal-gamma-(L-glutamyl-5-semialdehyde)-L-glutamate + phosphate + NADP(+) = [amino-group carrier protein]-C-terminal-gamma-(5-phospho-L-glutamyl)-L-glutamate + NADPH + H(+). The protein operates within amino-acid biosynthesis; L-lysine biosynthesis via AAA pathway; L-lysine from L-alpha-aminoadipate (Thermus route): step 3/5. It functions in the pathway amino-acid biosynthesis; L-arginine biosynthesis. Functionally, involved in both the arginine and lysine biosynthetic pathways. In Pyrococcus furiosus (strain ATCC 43587 / DSM 3638 / JCM 8422 / Vc1), this protein is Putative [LysW]-L-2-aminoadipate/[LysW]-L-glutamate phosphate reductase.